Consider the following 247-residue polypeptide: Anamorsin homolog (247 aa).

The segment at 4–128 (FKGLQKSLYI…ETGSSARLSF (125 aa)) is N-terminal SAM-like domain. The segment at 129-160 (AKKNASALNVWKISGDDEELIDEEDLLDEEDK) is linker. [2Fe-2S] cluster is bound by residues C171, C180, C183, and C185. A fe-S binding site A region spans residues 171-185 (CSTTGKRKACKNCSC). The [4Fe-4S] cluster site is built by C208, C211, C219, and C222. Short sequence motifs (cx2C motif) lie at residues 208-211 (CGNC) and 219-222 (CSTC). The fe-S binding site B stretch occupies residues 208–222 (CGNCYLGDAFRCSTC).

It belongs to the anamorsin family. In terms of assembly, monomer. It depends on [2Fe-2S] cluster as a cofactor. [4Fe-4S] cluster is required as a cofactor.

Its subcellular location is the cytoplasm. It localises to the mitochondrion intermembrane space. Component of the cytosolic iron-sulfur (Fe-S) protein assembly (CIA) machinery. Required for the maturation of extramitochondrial Fe-S proteins. Part of an electron transfer chain functioning in an early step of cytosolic Fe-S biogenesis, facilitating the de novo assembly of a [4Fe-4S] cluster on the cytosolic Fe-S scaffold complex. Electrons are transferred from NADPH via a FAD- and FMN-containing diflavin oxidoreductase. Together with the diflavin oxidoreductase, also required for the assembly of the diferric tyrosyl radical cofactor of ribonucleotide reductase (RNR), probably by providing electrons for reduction during radical cofactor maturation in the catalytic small subunit. This chain is Anamorsin homolog, found in Drosophila persimilis (Fruit fly).